We begin with the raw amino-acid sequence, 550 residues long: Envelope glycoprotein E (550 aa).

Positions 1-20 (MDRGAVVGFLLGVCVVSCLA) are cleaved as a signal peptide. Topologically, residues 21-419 (GTPKTSWRRV…HAPPTHGALR (399 aa)) are virion surface. The interaction with gI stretch occupies residues 63–88 (CGPLHPSWVSLMPPKQVPETVVDAAC). Asn-124 carries an N-linked (GlcNAc...) asparagine; by host glycan. The segment at 162–214 (QPAPVPTPPPTPADYDEDDNDEGEDESLAGTPASGTPRLPPPPAPPRSWPSAP) is disordered. Positions 164–173 (APVPTPPPTP) are enriched in pro residues. Residues 175-188 (DYDEDDNDEGEDES) are compositionally biased toward acidic residues. Residue Tyr-176 is modified to Sulfotyrosine; by host. Residues 199-209 (RLPPPPAPPRS) are compositionally biased toward pro residues. The segment at 235–380 (SPGETFSTNV…GHITISTAAQ (146 aa)) is fc-binding. The N-linked (GlcNAc...) asparagine; by host glycan is linked to Asn-243. 3 disulfides stabilise this stretch: Cys-271-Cys-297, Cys-280-Cys-289, and Cys-314-Cys-323. The disordered stretch occupies residues 394-413 (GADLAEPTHPHVGAPPHAPP). A compositionally biased stretch (low complexity) spans 403 to 413 (PHVGAPPHAPP). A helical membrane pass occupies residues 420–440 (LGAVMGAALLLSALGLSVWAC). Residues 441 to 550 (MTCWRRRAWR…SQASDSSVFW (110 aa)) lie on the Intravirion side of the membrane. 2 consecutive short sequence motifs (internalization motif) follow at residues 463–466 (YIRV) and 472–475 (YADW). Positions 470–495 (ELYADWSSDSEGERDQVPWLAPPERP) are interaction with VP22 and UL11. Phosphoserine; by host CK2 is present on residues Ser-476 and Ser-477. The acidic stretch occupies residues 476-484 (SSDSEGERD). A disordered region spans residues 476–550 (SSDSEGERDQ…SQASDSSVFW (75 aa)). Ser-503 carries the post-translational modification Phosphoserine. Polar residues predominate over residues 541–550 (SQASDSSVFW).

The protein belongs to the alphaherpesvirinae glycoprotein E family. Interacts with gI; this interaction enhances the Fc receptor function of gE. The heterodimer gE/gI interacts with the Fc part of host IgG. Interacts (via C-terminus) with VP22 tegument protein; this interaction is necessary for the recruitment of VP22 to the Golgi and its packaging into virions. Interacts (via C-terminus) with UL11 tegument protein. In terms of processing, phosphorylated on serines within the acidic cluster. Phosphorylation determines whether endocytosed viral gE traffics to the trans-Golgi network or recycles to the cell membrane. Post-translationally, N-glycosylated, and sulfated.

It localises to the virion membrane. The protein resides in the host cell membrane. The protein localises to the host cell junction. It is found in the host Golgi apparatus membrane. Its subcellular location is the host endosome membrane. In terms of biological role, in epithelial cells, the heterodimer gE/gI is required for the cell-to-cell spread of the virus, by sorting nascent virions to cell junctions. Once the virus reaches the cell junctions, virus particles can spread to adjacent cells extremely rapidly through interactions with cellular receptors that accumulate at these junctions. Implicated in basolateral spread in polarized cells. In neuronal cells, gE/gI is essential for the anterograde spread of the infection throughout the host nervous system. Together with US9, the heterodimer gE/gI is involved in the sorting and transport of viral structural components toward axon tips. Functionally, the heterodimer gE/gI serves as a receptor for the Fc part of host IgG. Dissociation of gE/gI from IgG occurs at acidic pH. May thus be involved in anti-HSV antibodies bipolar bridging, followed by intracellular endocytosis and degradation, thereby interfering with host IgG-mediated immune responses. This chain is Envelope glycoprotein E (gE), found in Human herpesvirus 1 (strain 17) (HHV-1).